The following is a 191-amino-acid chain: Prostaglandin-H2 D-isomerase (191 aa).

The signal sequence occupies residues 1-24 (MATPNRPWMGLLLLGVLGVLQTPA). N-linked (GlcNAc...) asparagine glycosylation is present at N51. C65 (nucleophile) is an active-site residue. N78 carries N-linked (GlcNAc...) asparagine glycosylation. A disulfide bridge connects residues C89 and C186.

Belongs to the calycin superfamily. Lipocalin family. As to quaternary structure, monomer. In the male reproductive system, it is expressed in the testis and epididymis, and is secreted into the seminal fluid.

Its subcellular location is the rough endoplasmic reticulum. It is found in the nucleus membrane. The protein resides in the golgi apparatus. It localises to the cytoplasm. The protein localises to the perinuclear region. Its subcellular location is the secreted. The enzyme catalyses prostaglandin H2 = prostaglandin D2. Functionally, catalyzes the conversion of PGH2 to PGD2, a prostaglandin involved in smooth muscle contraction/relaxation and a potent inhibitor of platelet aggregation. Involved in a variety of CNS functions, such as sedation, NREM sleep and PGE2-induced allodynia, and may have an anti-apoptotic role in oligodendrocytes. Binds small non-substrate lipophilic molecules, including biliverdin, bilirubin, retinal, retinoic acid and thyroid hormone, and may act as a scavenger for harmful hydrophobic molecules and as a secretory retinoid and thyroid hormone transporter. Possibly involved in development and maintenance of the blood-brain, blood-retina, blood-aqueous humor and blood-testis barrier. It is likely to play important roles in both maturation and maintenance of the central nervous system and male reproductive system. Involved in PLA2G3-dependent maturation of mast cells. PLA2G3 is secreted by immature mast cells and acts on nearby fibroblasts upstream to PTDGS to synthesize PGD2, which in turn promotes mast cell maturation and degranulation via PTGDR. This is Prostaglandin-H2 D-isomerase (PTGDS) from Ovis aries (Sheep).